Consider the following 197-residue polypeptide: GTP cyclohydrolase 1 (197 aa).

The Zn(2+) site is built by cysteine 85, histidine 88, and cysteine 156.

The protein belongs to the GTP cyclohydrolase I family. Toroid-shaped homodecamer, composed of two pentamers of five dimers.

The enzyme catalyses GTP + H2O = 7,8-dihydroneopterin 3'-triphosphate + formate + H(+). Its pathway is cofactor biosynthesis; 7,8-dihydroneopterin triphosphate biosynthesis; 7,8-dihydroneopterin triphosphate from GTP: step 1/1. The polypeptide is GTP cyclohydrolase 1 (Mesorhizobium japonicum (strain LMG 29417 / CECT 9101 / MAFF 303099) (Mesorhizobium loti (strain MAFF 303099))).